The following is a 398-amino-acid chain: Phosphoglycerate kinase (398 aa).

Residues 21 to 23 (DFN), arginine 36, 59 to 62 (HLGR), arginine 119, and arginine 157 contribute to the substrate site. ATP is bound by residues lysine 208, glycine 296, glutamate 327, and 354–357 (GGDS).

The protein belongs to the phosphoglycerate kinase family. In terms of assembly, monomer.

It localises to the cytoplasm. The catalysed reaction is (2R)-3-phosphoglycerate + ATP = (2R)-3-phospho-glyceroyl phosphate + ADP. The protein operates within carbohydrate degradation; glycolysis; pyruvate from D-glyceraldehyde 3-phosphate: step 2/5. This chain is Phosphoglycerate kinase, found in Streptococcus equi subsp. zooepidemicus (strain MGCS10565).